Reading from the N-terminus, the 216-residue chain is Probable nicotinate-nucleotide adenylyltransferase (216 aa).

Belongs to the NadD family.

The enzyme catalyses nicotinate beta-D-ribonucleotide + ATP + H(+) = deamido-NAD(+) + diphosphate. Its pathway is cofactor biosynthesis; NAD(+) biosynthesis; deamido-NAD(+) from nicotinate D-ribonucleotide: step 1/1. Functionally, catalyzes the reversible adenylation of nicotinate mononucleotide (NaMN) to nicotinic acid adenine dinucleotide (NaAD). This chain is Probable nicotinate-nucleotide adenylyltransferase, found in Geobacter sp. (strain M21).